The chain runs to 248 residues: MSFVVIIPARFASTRLPGKPLVDINGKPMIVHVLERARESGADRVIVATDHEDVARAVEAAGGEVCMTRADHQSGTERLAEVVEKCGFSDDTVIVNVQGDEPMIPAAIIRQVAENLAQRQVGMATLAVPIHHAEEAFNPNAVKVVMDAEGYALYFSRAAIPWDRDRFAASQEVIGDTFLRHLGIYGYRAGFIRRYVTWAPSPLEHIEMLEQLRVLWYGEKIHVAVAQEVPGTGVDTPEDLERVRAELH.

Belongs to the KdsB family.

The protein localises to the cytoplasm. It carries out the reaction 3-deoxy-alpha-D-manno-oct-2-ulosonate + CTP = CMP-3-deoxy-beta-D-manno-octulosonate + diphosphate. It functions in the pathway nucleotide-sugar biosynthesis; CMP-3-deoxy-D-manno-octulosonate biosynthesis; CMP-3-deoxy-D-manno-octulosonate from 3-deoxy-D-manno-octulosonate and CTP: step 1/1. Its pathway is bacterial outer membrane biogenesis; lipopolysaccharide biosynthesis. Functionally, activates KDO (a required 8-carbon sugar) for incorporation into bacterial lipopolysaccharide in Gram-negative bacteria. In Enterobacter sp. (strain 638), this protein is 3-deoxy-manno-octulosonate cytidylyltransferase.